A 393-amino-acid chain; its full sequence is Formate-dependent phosphoribosylglycinamide formyltransferase (393 aa).

Residues 22–23 (EL) and E82 contribute to the N(1)-(5-phospho-beta-D-ribosyl)glycinamide site. Residues R114, K155, 160–165 (SSGKGQ), 195–198 (ESFV), and E203 contribute to the ATP site. An ATP-grasp domain is found at 119 to 308 (RLAAEEVGLK…EFALHVRAIL (190 aa)). E267 and E279 together coordinate Mg(2+). N(1)-(5-phospho-beta-D-ribosyl)glycinamide-binding positions include D286, K356, and 363–364 (RR).

It belongs to the PurK/PurT family. As to quaternary structure, homodimer.

The enzyme catalyses N(1)-(5-phospho-beta-D-ribosyl)glycinamide + formate + ATP = N(2)-formyl-N(1)-(5-phospho-beta-D-ribosyl)glycinamide + ADP + phosphate + H(+). Its pathway is purine metabolism; IMP biosynthesis via de novo pathway; N(2)-formyl-N(1)-(5-phospho-D-ribosyl)glycinamide from N(1)-(5-phospho-D-ribosyl)glycinamide (formate route): step 1/1. In terms of biological role, involved in the de novo purine biosynthesis. Catalyzes the transfer of formate to 5-phospho-ribosyl-glycinamide (GAR), producing 5-phospho-ribosyl-N-formylglycinamide (FGAR). Formate is provided by PurU via hydrolysis of 10-formyl-tetrahydrofolate. The chain is Formate-dependent phosphoribosylglycinamide formyltransferase from Maridesulfovibrio salexigens (strain ATCC 14822 / DSM 2638 / NCIMB 8403 / VKM B-1763) (Desulfovibrio salexigens).